Reading from the N-terminus, the 134-residue chain is ATP synthase epsilon chain (134 aa).

The protein belongs to the ATPase epsilon chain family. In terms of assembly, F-type ATPases have 2 components, CF(1) - the catalytic core - and CF(0) - the membrane proton channel. CF(1) has five subunits: alpha(3), beta(3), gamma(1), delta(1), epsilon(1). CF(0) has three main subunits: a, b and c.

The protein resides in the cell inner membrane. In terms of biological role, produces ATP from ADP in the presence of a proton gradient across the membrane. In Solibacter usitatus (strain Ellin6076), this protein is ATP synthase epsilon chain.